The following is a 36-amino-acid chain: Photosystem I reaction center subunit VIII (36 aa).

A helical transmembrane segment spans residues 9–29 (ILTPVVTLVFPGLMFALFFVL).

It belongs to the PsaI family.

The protein resides in the plastid. Its subcellular location is the chloroplast thylakoid membrane. In terms of biological role, may help in the organization of the PsaL subunit. The protein is Photosystem I reaction center subunit VIII of Emiliania huxleyi (Coccolithophore).